Reading from the N-terminus, the 146-residue chain is Large ribosomal subunit protein bL9 (146 aa).

This sequence belongs to the bacterial ribosomal protein bL9 family.

Binds to the 23S rRNA. This Deinococcus deserti (strain DSM 17065 / CIP 109153 / LMG 22923 / VCD115) protein is Large ribosomal subunit protein bL9.